We begin with the raw amino-acid sequence, 138 residues long: Transcription antitermination protein NusB (138 aa).

The protein belongs to the NusB family.

Involved in transcription antitermination. Required for transcription of ribosomal RNA (rRNA) genes. Binds specifically to the boxA antiterminator sequence of the ribosomal RNA (rrn) operons. The polypeptide is Transcription antitermination protein NusB (Serratia proteamaculans (strain 568)).